The chain runs to 116 residues: Protein Wnt-5(III) (116 aa).

Ser1 carries the O-palmitoleoyl serine; by PORCN lipid modification. Asn69 carries an N-linked (GlcNAc...) asparagine glycan. An intrachain disulfide couples Cys82 to Cys97.

Belongs to the Wnt family. In terms of processing, palmitoleoylation is required for efficient binding to frizzled receptors. Depalmitoleoylation leads to Wnt signaling pathway inhibition.

It is found in the secreted. Its subcellular location is the extracellular space. The protein localises to the extracellular matrix. Ligand for members of the frizzled family of seven transmembrane receptors. Probable developmental protein. May be a signaling molecule which affects the development of discrete regions of tissues. Is likely to signal over only few cell diameters. This is Protein Wnt-5(III) (WNT-5(III)) from Eptatretus stoutii (Pacific hagfish).